Consider the following 510-residue polypeptide: MRGAFYVAIALLGSHTAAECNQDEPQGAPNNDFLTFGGTIEKMLPRRVLRERRDSKDKLTVHAGAEERVMDPPPEAVEQAIMKTAGVMRTDSDDVIARAAGAIRAHEEIEALFRRIDPTLYNVNGQALHALPKPTNYMVSVASDIPTVPAKRAKVKASADVINNAAWRVSKHDLRLAPPEPSPSSIASSGIRFDNQPIAEKAFKLDLNKHSDEVEIINSNSKRKRIDLTPSHVGEQAPHPLPELQKYKVSVAVSIPMVLATKLEGDGPTLIMRNAANIITTHDFRPAPFGSSTRTVASSNSQIHSQPIAQEASKFALNVDPNEVKSLFHENLPLVGHALHTRVGNDELVPLATVNSIKAGNTQGPYVHKPRMATDEEIHAAFLEAFNLPFHQYLYETSIMIKIVKRQYKTSPGNHRIVESFSSLVNNQELSKLKESLGPDLQNLLAGMLELQDDLKSLREAYYVKLLIMYELFYDFCYVRLDLFDALVPKVDRTVWILKLKNYETLPSHD.

An N-terminal signal peptide occupies residues 1–18; sequence MRGAFYVAIALLGSHTAA. The RxLR-dEER motif lies at 47–68; the sequence is RVLRERRDSKDKLTVHAGAEER.

Belongs to the RxLR effector family.

The protein resides in the secreted. Its subcellular location is the host nucleus. Secreted effector that acts as an elicitor that induces cell death in host plant cells. The chain is Secreted RxLR effector protein 24 from Plasmopara viticola (Downy mildew of grapevine).